The primary structure comprises 66 residues: MPQLDMSPWPMVIMSMILTLFYITQLKMLNFTFHTTPSSKLTMSHKHKTTWELKWTKIYLPPSTYQ.

The chain crosses the membrane as a helical span at residues 8 to 24; that stretch reads PWPMVIMSMILTLFYIT. At lysine 54 the chain carries N6-acetyllysine; alternate. The residue at position 54 (lysine 54) is an N6-succinyllysine; alternate. At lysine 57 the chain carries N6-acetyllysine.

The protein belongs to the ATPase protein 8 family. F-type ATPases have 2 components, CF(1) - the catalytic core - and CF(0) - the membrane proton channel. Component of an ATP synthase complex composed of ATP5PB, ATP5MC1, ATP5F1E, ATP5PD, ATP5ME, ATP5PF, ATP5MF, MT-ATP6, MT-ATP8, ATP5F1A, ATP5F1B, ATP5F1D, ATP5F1C, ATP5PO, ATP5MG, ATP5MK and ATP5MJ. Interacts with PRICKLE3.

The protein resides in the mitochondrion membrane. Its function is as follows. Mitochondrial membrane ATP synthase (F(1)F(0) ATP synthase or Complex V) produces ATP from ADP in the presence of a proton gradient across the membrane which is generated by electron transport complexes of the respiratory chain. F-type ATPases consist of two structural domains, F(1) - containing the extramembraneous catalytic core and F(0) - containing the membrane proton channel, linked together by a central stalk and a peripheral stalk. During catalysis, ATP synthesis in the catalytic domain of F(1) is coupled via a rotary mechanism of the central stalk subunits to proton translocation. Part of the complex F(0) domain. Minor subunit located with subunit a in the membrane. The sequence is that of ATP synthase protein 8 (MT-ATP8) from Alouatta guariba (Brown howler monkey).